Here is a 393-residue protein sequence, read N- to C-terminus: MADRRRRLRPGTLAPVREGVNCRSRCFTKHKNGLKFPTSLHSRQLVFPRKGLDDFRKGCPPCTGLVTQVPVEGFLPQIYHRAPQLAPKKRQIKLLKEADVLSKLSPAQQARKAFLEDVEAHLTPHPLALYLNLEEAMPIELLSKVLEVLDPDRKLEDTWAYCQDTRKGMKEPTKLLKKHSTQVYLGPSKKTSVSNAGQWLYEEKPHKMDLLHENGPRPGLHENGISDIDEEFILKQFDIDYETKPSHDALHTMKLNQVPLELKRSVGLSKLQETEFFQKLGYERKLQKPQNPYKPKWVKMRYGAWYLNPKLWKKQRVDEPLVDPEVSHKAQEENFKKELQEQEELLADLHGTVAFKDFILSRGYRTPRFLENMYIGKECKRACNKTPIKRTQA.

A coiled-coil region spans residues 326–354; that stretch reads VSHKAQEENFKKELQEQEELLADLHGTVA.

Belongs to the FAM47 family. Interacts with PRMT5; the interaction is direct. Interacts with WDR77.

The protein localises to the nucleus. Its subcellular location is the chromosome. The protein resides in the cytoplasm. Its function is as follows. Promotes histone methylation by localizing the arginine methyltransferase PRMT5 to chromatin. The chain is Protein FAM47E (FAM47E) from Homo sapiens (Human).